Here is a 352-residue protein sequence, read N- to C-terminus: MEGISIYTSDNYTEEMGSGDYDSIKEPCFREENAHFNRIFLPTIYSIIFLTGIVGNGLVILVMGYQKKLRSMTDKYRLHLSVADLLFVITLPFWAVDAVANWYFGNFLCKAVHVIYTVNLYSSVLILAFISLDRYLAIVHATNSQRPRKLLAEKVVYVGVWIPALLLTIPDFIFASVSEADDRYICDRFYPNDLWVVVFQFQHIMVGLILPGIVILSCYCIIISKLSHSKGHQKRKALKTTVILILAFFACWLPYYIGISIDSFILLEIIKQGCEFENTVHKWISITEALAFFHCCLNPILYAFLGAKFKTSAQHALTSVSRGSSLKILSKGKRGGHSSVSTESESSSFHSS.

Residues 1–21 (MEGISIYTSDNYTEEMGSGDY) are important for chemokine binding and signaling. Over 1–38 (MEGISIYTSDNYTEEMGSGDYDSIKEPCFREENAHFNR) the chain is Extracellular. Tyrosine 7 is modified (sulfotyrosine). N-linked (GlcNAc...) asparagine glycosylation occurs at asparagine 11. Position 12 is a sulfotyrosine (tyrosine 12). O-linked (Xyl...) (chondroitin sulfate) serine glycosylation occurs at serine 18. Position 21 is a sulfotyrosine (tyrosine 21). Disulfide bonds link cysteine 28-cysteine 274 and cysteine 109-cysteine 186. Residues 39-63 (IFLPTIYSIIFLTGIVGNGLVILVM) form a helical membrane-spanning segment. At 64 to 77 (GYQKKLRSMTDKYR) the chain is on the cytoplasmic side. A helical membrane pass occupies residues 78 to 99 (LHLSVADLLFVITLPFWAVDAV). The interval 94–97 (WAVD) is chemokine binding. The Extracellular portion of the chain corresponds to 100-110 (ANWYFGNFLCK). The helical transmembrane segment at 111 to 130 (AVHVIYTVNLYSSVLILAFI) threads the bilayer. The chemokine binding stretch occupies residues 113–117 (HVIYT). The Cytoplasmic portion of the chain corresponds to 131–154 (SLDRYLAIVHATNSQRPRKLLAEK). The Important for signaling motif lies at 133 to 135 (DRY). The interval 135–147 (YLAIVHATNSQRP) is involved in dimerization; when bound to chemokine. A helical membrane pass occupies residues 155 to 174 (VVYVGVWIPALLLTIPDFIF). Residues 175-195 (ASVSEADDRYICDRFYPNDLW) lie on the Extracellular side of the membrane. The chemokine binding, important for signaling stretch occupies residues 186-190 (CDRFY). The tract at residues 191 to 210 (PNDLWVVVFQFQHIMVGLIL) is involved in dimerization. The chain crosses the membrane as a helical span at residues 196 to 216 (VVVFQFQHIMVGLILPGIVIL). Over 217-241 (SCYCIIISKLSHSKGHQKRKALKTT) the chain is Cytoplasmic. Residues 242–261 (VILILAFFACWLPYYIGISI) traverse the membrane as a helical segment. Topologically, residues 262–282 (DSFILLEIIKQGCEFENTVHK) are extracellular. The segment at 266–268 (LLE) is involved in dimerization. Residues 283-302 (WISITEALAFFHCCLNPILY) traverse the membrane as a helical segment. Over 303-352 (AFLGAKFKTSAQHALTSVSRGSSLKILSKGKRGGHSSVSTESESSSFHSS) the chain is Cytoplasmic. Phosphoserine is present on residues serine 319 and serine 321. Residues serine 324 and serine 325 each carry the phosphoserine; by PKC and GRK6 modification. The disordered stretch occupies residues 329–352 (LSKGKRGGHSSVSTESESSSFHSS). Residue serine 330 is modified to Phosphoserine; by GRK6. Lysine 331 is covalently cross-linked (Glycyl lysine isopeptide (Lys-Gly) (interchain with G-Cter in ubiquitin)). The span at 337 to 352 (HSSVSTESESSSFHSS) shows a compositional bias: low complexity. Phosphoserine; by GRK6 is present on serine 339. Phosphoserine is present on residues serine 348 and serine 351.

Belongs to the G-protein coupled receptor 1 family. Monomer. Can form homodimers. Interacts with CD164. Interacts with ARRB2; the interaction is dependent on the C-terminal phosphorylation of CXCR4 and allows activation of MAPK1 and MAPK3. Interacts with ARR3; the interaction is dependent on the C-terminal phosphorylation of CXCR4 and modulates calcium mobilization. Interacts with RNF113A; the interaction, enhanced by CXCL12, promotes CXCR4 ubiquitination and subsequent degradation. Interacts (via the cytoplasmic C-terminal) with ITCH (via the WW domains I and II); the interaction, enhanced by CXCL12, promotes CXCR4 ubiquitination and leads to its degradation. Interacts with extracellular ubiquitin. Interacts with DBN1; this interaction is enhanced by antigenic stimulation. Following LPS binding, may form a complex with GDF5, HSP90AA1 and HSPA8. Post-translationally, phosphorylated on agonist stimulation. Rapidly phosphorylated on serine and threonine residues in the C-terminal. Phosphorylation at Ser-324 and Ser-325 leads to recruitment of ITCH, ubiquitination and protein degradation. Ubiquitinated after ligand binding, leading to its degradation. Ubiquitinated by ITCH at the cell membrane on agonist stimulation. The ubiquitin-dependent mechanism, endosomal sorting complex required for transport (ESCRT), then targets CXCR4 for lysosomal degradation. This process is dependent also on prior Ser-/Thr-phosphorylation in the C-terminal of CXCR4. Also binding of ARRB1 to STAM negatively regulates CXCR4 sorting to lysosomes though modulating ubiquitination of SFR5S. In terms of processing, sulfation is required for efficient binding of CXCL12/SDF-1alpha and promotes its dimerization. Post-translationally, O- and N-glycosylated. N-glycosylation can mask coreceptor function. The O-glycosylation chondroitin sulfate attachment does not affect interaction with CXCL12/SDF-1alpha nor its coreceptor activity.

It localises to the cell membrane. Its subcellular location is the cell junction. The protein resides in the early endosome. The protein localises to the late endosome. It is found in the lysosome. Receptor for the C-X-C chemokine CXCL12/SDF-1 that transduces a signal by increasing intracellular calcium ion levels and enhancing MAPK1/MAPK3 activation. Involved in the AKT signaling cascade. Plays a role in regulation of cell migration, e.g. during wound healing. Acts as a receptor for extracellular ubiquitin; leading to enhanced intracellular calcium ions and reduced cellular cAMP levels. Binds bacterial lipopolysaccharide (LPS) et mediates LPS-induced inflammatory response, including TNF secretion by monocytes. Involved in hematopoiesis and in cardiac ventricular septum formation. Also plays an essential role in vascularization of the gastrointestinal tract, probably by regulating vascular branching and/or remodeling processes in endothelial cells. Involved in cerebellar development. In the CNS, could mediate hippocampal-neuron survival. This is C-X-C chemokine receptor type 4 (CXCR4) from Papio anubis (Olive baboon).